A 511-amino-acid chain; its full sequence is Maturase K (511 aa).

This sequence belongs to the intron maturase 2 family. MatK subfamily.

The protein resides in the plastid. It localises to the chloroplast. Usually encoded in the trnK tRNA gene intron. Probably assists in splicing its own and other chloroplast group II introns. The protein is Maturase K of Oryza nivara (Indian wild rice).